The primary structure comprises 206 residues: Small ribosomal subunit protein uS4A (206 aa).

An S4 RNA-binding domain is found at 98-164 (MRLDNVVYRL…EKFKTFAENP (67 aa)).

This sequence belongs to the universal ribosomal protein uS4 family. In terms of assembly, part of the 30S ribosomal subunit. Contacts protein S5. The interaction surface between S4 and S5 is involved in control of translational fidelity.

In terms of biological role, one of the primary rRNA binding proteins, it binds directly to 16S rRNA where it nucleates assembly of the body of the 30S subunit. Functionally, with S5 and S12 plays an important role in translational accuracy. The polypeptide is Small ribosomal subunit protein uS4A (Clostridium botulinum (strain ATCC 19397 / Type A)).